Consider the following 398-residue polypeptide: Probable elongation factor 1-gamma (398 aa).

The GST C-terminal domain maps to 66-199; it reads GTSANAETVQ…SVAQFNQAKF (134 aa). The segment at 210-248 is disordered; that stretch reads APKAEKPKKEAKPAAAAAQPEDDEPKEEKSKDPFQDMPK. The segment covering 211 to 221 has biased composition (basic and acidic residues); it reads PKAEKPKKEAK. The 160-residue stretch at 239–398 folds into the EF-1-gamma C-terminal domain; it reads SKDPFQDMPK…KKFNQGKIFK (160 aa).

EF-1 is composed of four subunits: alpha, beta, delta, and gamma. Post-translationally, AMPylated by fic-1.

Probably plays a role in anchoring the complex to other cellular components. This is Probable elongation factor 1-gamma from Caenorhabditis elegans.